A 433-amino-acid polypeptide reads, in one-letter code: Shufflon protein C' (433 aa).

Residues 1 to 361 form a constant region region; the sequence is MKKYDRGWAS…TGAILSCQSG (361 aa). A variable region region spans residues 362–433; it reads RWSGGNKINY…HVDAYCCPFN (72 aa).

This is Shufflon protein C' from Escherichia coli.